The chain runs to 203 residues: Small ribosomal subunit protein uS4c (203 aa).

The disordered stretch occupies residues threonine 17–aspartate 39. One can recognise an S4 RNA-binding domain in the interval methionine 92 to proline 164.

Belongs to the universal ribosomal protein uS4 family. As to quaternary structure, part of the 30S ribosomal subunit. Contacts protein S5. The interaction surface between S4 and S5 is involved in control of translational fidelity.

The protein resides in the plastid. The protein localises to the chloroplast. In terms of biological role, one of the primary rRNA binding proteins, it binds directly to 16S rRNA where it nucleates assembly of the body of the 30S subunit. Its function is as follows. With S5 and S12 plays an important role in translational accuracy. The sequence is that of Small ribosomal subunit protein uS4c (rps4) from Phaeodactylum tricornutum (strain CCAP 1055/1).